Reading from the N-terminus, the 132-residue chain is Neurophysin 2 (132 aa).

7 disulfide bridges follow: Cys10–Cys54, Cys13–Cys27, Cys21–Cys44, Cys28–Cys34, Cys61–Cys73, Cys67–Cys85, and Cys74–Cys79.

It belongs to the vasopressin/oxytocin family.

The protein localises to the secreted. Its function is as follows. Neurophysin 2 specifically binds vasopressin. The polypeptide is Neurophysin 2 (Struthio camelus (Common ostrich)).